The primary structure comprises 226 residues: Apoptosis regulator OPG045 (226 aa).

It belongs to the orthopoxvirus OPG045 family. As to quaternary structure, homodimer. Interacts with host pro-apoptotic protein BCL2L11 (via BH3 domain). Interacts with host NLRP1. Interacts with host BAK.

It is found in the host mitochondrion outer membrane. Its subcellular location is the host cytoplasm. Functionally, plays a role in evading host innate immune response by inhibiting host inflammasome activation. Interacts with and inhibits NLR-mediated interleukin-1 beta/IL1B production in infected cells. At the host mitochondria outer membrane, interacts with the BH3 domain of host BAK and prevents BAK from binding active BAX. In turn, host apoptosis is inhibited. The sequence is that of Apoptosis regulator OPG045 (OPG045) from Homo sapiens (Human).